The primary structure comprises 263 residues: Mediator of RNA polymerase II transcription subunit 4 (263 aa).

Residues 62-106 (QLAAEQAGIEKKMDGLREQVKEQDEEINQLQKQLKEAEHILATSI) are a coiled coil. The interval 221–263 (LHMTMGAGAGSVSLDTRSHKDASQDDVEVMSTDSSSSSSSDSQ) is disordered. Positions 251-263 (STDSSSSSSSDSQ) are enriched in low complexity.

Belongs to the Mediator complex subunit 4 family. In terms of assembly, component of the Mediator complex.

It is found in the nucleus. Its function is as follows. Component of the Mediator complex, a coactivator involved in the regulated transcription of nearly all RNA polymerase II-dependent genes. Mediator functions as a bridge to convey information from gene-specific regulatory proteins to the basal RNA polymerase II transcription machinery. Mediator is recruited to promoters by direct interactions with regulatory proteins and serves as a scaffold for the assembly of a functional preinitiation complex with RNA polymerase II and the general transcription factors. In Aedes aegypti (Yellowfever mosquito), this protein is Mediator of RNA polymerase II transcription subunit 4 (MED4).